The following is a 475-amino-acid chain: ATP synthase subunit beta (475 aa).

161–168 (GGAGVGKT) serves as a coordination point for ATP.

It belongs to the ATPase alpha/beta chains family. In terms of assembly, F-type ATPases have 2 components, CF(1) - the catalytic core - and CF(0) - the membrane proton channel. CF(1) has five subunits: alpha(3), beta(3), gamma(1), delta(1), epsilon(1). CF(0) has three main subunits: a(1), b(2) and c(9-12). The alpha and beta chains form an alternating ring which encloses part of the gamma chain. CF(1) is attached to CF(0) by a central stalk formed by the gamma and epsilon chains, while a peripheral stalk is formed by the delta and b chains.

It localises to the cell membrane. The enzyme catalyses ATP + H2O + 4 H(+)(in) = ADP + phosphate + 5 H(+)(out). Functionally, produces ATP from ADP in the presence of a proton gradient across the membrane. The catalytic sites are hosted primarily by the beta subunits. The sequence is that of ATP synthase subunit beta from Mycoplasma mycoides subsp. mycoides SC (strain CCUG 32753 / NCTC 10114 / PG1).